The sequence spans 253 residues: 5'-nucleotidase SurE 2 (253 aa).

A divalent metal cation is bound by residues Asp8, Asp9, Ser39, and Asn92.

Belongs to the SurE nucleotidase family. The cofactor is a divalent metal cation.

It is found in the cytoplasm. The enzyme catalyses a ribonucleoside 5'-phosphate + H2O = a ribonucleoside + phosphate. In terms of biological role, nucleotidase that shows phosphatase activity on nucleoside 5'-monophosphates. This is 5'-nucleotidase SurE 2 from Burkholderia lata (strain ATCC 17760 / DSM 23089 / LMG 22485 / NCIMB 9086 / R18194 / 383).